Reading from the N-terminus, the 284-residue chain is Syntaxin-like protein psy1 (284 aa).

Positions 23–57 (EEIDHIRDAIRQIEDNVGRIEMLHQQSLQEIDEAN) form a coiled coil. Residues 181-243 (LREVQERHAD…GEGTQHMDRA (63 aa)) form the t-SNARE coiled-coil homology domain. A helical; Anchor for type IV membrane protein transmembrane segment spans residues 260–280 (ICVVIICVIVAVLCGVLIPVL).

The protein belongs to the syntaxin family.

It localises to the cell membrane. Its subcellular location is the prospore membrane. This is Syntaxin-like protein psy1 (psy1) from Schizosaccharomyces pombe (strain 972 / ATCC 24843) (Fission yeast).